The following is a 393-amino-acid chain: Ornithine decarboxylase 2 (393 aa).

Residue Lys62 is modified to N6-(pyridoxal phosphate)lysine. Pyridoxal 5'-phosphate contacts are provided by residues Ser194, Gly231, and 265–268 (EPGR). 314–315 (YY) lines the substrate pocket. Cys343 acts as the Proton donor; shared with dimeric partner in catalysis. Asp344 provides a ligand contact to substrate. Pyridoxal 5'-phosphate is bound at residue Tyr371.

The protein belongs to the Orn/Lys/Arg decarboxylase class-II family. In terms of assembly, homodimer. Only the dimer is catalytically active, as the active sites are constructed of residues from both monomers. The cofactor is pyridoxal 5'-phosphate.

It catalyses the reaction L-ornithine + H(+) = putrescine + CO2. It participates in amine and polyamine biosynthesis; putrescine biosynthesis via L-ornithine pathway; putrescine from L-ornithine: step 1/1. With respect to regulation, inhibited by antizyme (AZ) in response to polyamine levels. AZ inhibits the assembly of the functional homodimer by binding to ODC monomers and targeting them for ubiquitin-independent proteolytic destruction by the 26S proteasome. Functionally, catalyzes the first and rate-limiting step of polyamine biosynthesis that converts ornithine into putrescine, which is the precursor for the polyamines, spermidine and spermine. Polyamines are essential for cell proliferation and are implicated in cellular processes, ranging from DNA replication to apoptosis. The chain is Ornithine decarboxylase 2 (Odc2) from Drosophila melanogaster (Fruit fly).